Consider the following 367-residue polypeptide: Homeobox protein Nkx-6.1 (367 aa).

Residues 36 to 133 are disordered; the sequence is YPAAYPPLPA…SSSSSSSASA (98 aa). 3 stretches are compositionally biased toward low complexity: residues 48 to 59, 78 to 91, and 110 to 133; these read PSSSSSSSSSSS, GGLSSLGSPPQQLS, and ASGAALPSASPSGSSSSSSSSASA. The repressor domain stretch occupies residues 102-268; that stretch reads LSRPSMPVAS…KYLAGPERAR (167 aa). Position 189 is an asymmetric dimethylarginine (R189). The segment at residues 236–295 is a DNA-binding region (homeobox); sequence RKHTRPTFSGQQIFALEKTFEQTKYLAGPERARLAYSLGMTESQVKVWFQNRRTKWRKKH. The tract at residues 294–367 is disordered; sequence KHAAEMATAK…LHASEPESSS (74 aa). Residues 304 to 317 show a composition bias toward basic and acidic residues; that stretch reads KKQDSETERLKGAS. Positions 306-367 are involved in DNA-binding; the sequence is QDSETERLKG…LHASEPESSS (62 aa).

As to expression, pancreatic beta cells.

It is found in the nucleus. In terms of biological role, transcription factor which binds to specific A/T-rich DNA sequences in the promoter regions of a number of genes. Involved in the development of insulin-producing beta cells in the islets of Langerhans at the secondary transition. Together with NKX2-2 and IRX3 acts to restrict the generation of motor neurons to the appropriate region of the neural tube. Belongs to the class II proteins of neuronal progenitor factors, which are induced by SHH signals. The sequence is that of Homeobox protein Nkx-6.1 (NKX6-1) from Homo sapiens (Human).